The following is a 145-amino-acid chain: MASKSSITPLLLAAVLASVFAAATATGQYCYAGMGLPSNPLEGCREYVAQQTCGVTIAGSPVSSEPGDTPKDRCCQELDEAPQHCRCEAVRYFIGRRSHPDWSVLKDLPGCPKEPQRDFAKVLVTPGQCNVLTVHNAPYCLGLDI.

An N-terminal signal peptide occupies residues 1 to 25 (MASKSSITPLLLAAVLASVFAAATA).

The protein belongs to the protease inhibitor I6 (cereal trypsin/alpha-amylase inhibitor) family. As to quaternary structure, heterotetramer of one CMa, one CMb and two CMd chains. Five disulfide bonds, which are essential for the inhibitor activity, are probably present. As to expression, endosperm.

Its subcellular location is the secreted. Alpha-amylase/trypsin inhibitor. It could be involved in insect defense mechanisms. The protein is Alpha-amylase/trypsin inhibitor CMa (IAT1) of Hordeum vulgare (Barley).